The sequence spans 784 residues: MPRALWTAWVWAVIILSTEGASDQASSLSCDPTGVCDGHSRSLNSIPSGLTAGVKSLDLSNNDITYVGNRDLQRCVNLKTLRLGANEIHTVEEDSFFHLRNLEYLDLSYNRLSNLSSSWFRSLYVLKFLNLLGNLYKTLGETSLFSHLPNLRTLKVGNSNSFTEIHEKDFTGLTFLEELEISAQNLQIYVPKSLKSIQNISHLILHLKQPILLVDILVDIVSSLDCFELRDTNLHTFHFSEASISEMSTSVKKLIFRNVQFTDESFVEVVKLFNYVSGILEVEFDDCTHDGIGDFRALSLDRIRHLGNVETLTIRKLHIPQFFLFHDLSSIYPLTGRVKRVTIENSKVFLVPCLLSQHLKSLEYLDLSENLMSEETLKNSACKDAWPFLQTLVLRQNRLKSLEKTGELLLTLENLNNLDISKNNFLSMPETCQWPGKMKQLNLSSTRIHSLTQCLPQTLEILDVSNNNLDSFSLILPQLKELYISRNKLKTLPDASFLPVLSVMRISRNIINTFSKEQLDSFQQLKTLEAGGNNFICSCDFLSFTQGQQALGRVLVDWPDDYRCDSPSHVRGQRVQDARLSLSECHRAAVVSAACCALFLLLLLTGVLCHRFHGLWYMKMMWAWLQAKRKPRKAPRRDICYDAFVSYSERDSYWVENLMVQELEHFNPPFKLCLHKRDFIPGKWIIDNIIDSIEKSHKTIFVLSENFVKSEWCKYELDFSHFRLFDENNDAAILILLEPIDKKAIPQRFCKLRKIMNTKTYLEWPVDETQQEGFWLNLRAAIRS.

The signal sequence occupies residues M1 to G20. At A21–R587 the chain is on the extracellular side. A disulfide bond links C30 and C36. 19 LRR repeats span residues V54–N77, L78–N101, L102–V125, L126–N150, L151–F175, L176–N199, I200–S223, L224–S250, V251–G278, I279–N308, V309–R337, V338–S361, L362–F388, L389–N414, L415–K437, M438–Q457, T458–Q478, L479–V500, and L501–Q524. N114 carries an N-linked (GlcNAc...) asparagine glycan. N199 is a glycosylation site (N-linked (GlcNAc...) asparagine). An intrachain disulfide couples C353 to C382. An intrachain disulfide couples C432 to C454. Residue N442 is glycosylated (N-linked (GlcNAc...) asparagine). Residues L525–R579 form the LRRCT domain. A helical membrane pass occupies residues A588–L608. The Cytoplasmic segment spans residues C609–S784. One can recognise a TIR domain in the interval I639–I782. Residue K754 forms a Glycyl lysine isopeptide (Lys-Gly) (interchain with G-Cter in ubiquitin) linkage. Positions Y761–L778 match the ATG16L1-binding motif motif.

Belongs to the Toll-like receptor family. As to quaternary structure, interacts with LY96, TLR1 and TLR6 (via extracellular domain). TLR2 seems to exist in heterodimers with either TLR1 or TLR6 before stimulation by the ligand. The heterodimers form bigger oligomers in response to their corresponding ligands as well as further heterotypic associations with other receptors such as CD14 and/or CD36. Binds MYD88 (via TIR domain). Interacts with TICAM1. Interacts with CNPY3. Interacts with ATG16L1. Interacts with PPP1R11. Interacts with TICAM2. Interacts with TIRAP. Post-translationally, ubiquitinated at Lys-754 by PPP1R11, leading to its degradation. Deubiquitinated by USP2. Glycosylation of Asn-442 is critical for secretion of the N-terminal ectodomain of TLR2.

The protein localises to the membrane. Its subcellular location is the cytoplasmic vesicle. It is found in the phagosome membrane. It localises to the membrane raft. In terms of biological role, cooperates with LY96 to mediate the innate immune response to bacterial lipoproteins and other microbial cell wall components. Cooperates with TLR1 or TLR6 to mediate the innate immune response to bacterial lipoproteins or lipopeptides. Acts via MYD88 and TRAF6, leading to NF-kappa-B activation, cytokine secretion and the inflammatory response. May also promote apoptosis in response to lipoproteins. Forms activation clusters composed of several receptors depending on the ligand, these clusters trigger signaling from the cell surface and subsequently are targeted to the Golgi in a lipid-raft dependent pathway. Forms the cluster TLR2:TLR6:CD14:CD36 in response to diacylated lipopeptides and TLR2:TLR1:CD14 in response to triacylated lipopeptides. The polypeptide is Toll-like receptor 2 (TLR2) (Bos taurus (Bovine)).